Here is a 76-residue protein sequence, read N- to C-terminus: uncharacterized protein (76 aa).

Helical transmembrane passes span 2-22 (LKVA…YSLF), 28-48 (LLIV…VEAI), and 56-76 (EYLL…KFII).

The protein resides in the cell membrane. This is an uncharacterized protein from Bacillus subtilis (strain 168).